The sequence spans 828 residues: Periplasmic nitrate reductase (828 aa).

The tat-type signal signal peptide spans methionine 1–alanine 31. In terms of domain architecture, 4Fe-4S Mo/W bis-MGD-type spans isoleucine 39–aspartate 95. The [4Fe-4S] cluster site is built by cysteine 46, cysteine 49, cysteine 53, and cysteine 81. Mo-bis(molybdopterin guanine dinucleotide)-binding positions include lysine 83, glutamine 150, asparagine 175, cysteine 179, tryptophan 212–methionine 219, serine 243–histidine 247, glutamine 262–aspartate 264, methionine 372, glutamine 376, asparagine 482, serine 508–aspartate 509, lysine 531, aspartate 558, and threonine 718–threonine 727. Phenylalanine 794 lines the substrate pocket. Positions 802 and 819 each coordinate Mo-bis(molybdopterin guanine dinucleotide).

The protein belongs to the prokaryotic molybdopterin-containing oxidoreductase family. NasA/NapA/NarB subfamily. Component of the periplasmic nitrate reductase NapAB complex composed of NapA and NapB. The cofactor is [4Fe-4S] cluster. Mo-bis(molybdopterin guanine dinucleotide) serves as cofactor. Post-translationally, predicted to be exported by the Tat system. The position of the signal peptide cleavage has not been experimentally proven.

It is found in the periplasm. The catalysed reaction is 2 Fe(II)-[cytochrome] + nitrate + 2 H(+) = 2 Fe(III)-[cytochrome] + nitrite + H2O. Catalytic subunit of the periplasmic nitrate reductase complex NapAB. Receives electrons from NapB and catalyzes the reduction of nitrate to nitrite. This is Periplasmic nitrate reductase from Salmonella arizonae (strain ATCC BAA-731 / CDC346-86 / RSK2980).